The sequence spans 144 residues: Ribosome maturation factor RimP (144 aa).

Belongs to the RimP family.

It localises to the cytoplasm. Required for maturation of 30S ribosomal subunits. The polypeptide is Ribosome maturation factor RimP (Methylobacillus flagellatus (strain ATCC 51484 / DSM 6875 / VKM B-1610 / KT)).